The primary structure comprises 241 residues: Pyridoxine 5'-phosphate synthase (241 aa).

Position 7 (Asn7) interacts with 3-amino-2-oxopropyl phosphate. 9–10 is a 1-deoxy-D-xylulose 5-phosphate binding site; sequence DH. Residue Arg18 participates in 3-amino-2-oxopropyl phosphate binding. Residue His43 is the Proton acceptor of the active site. 1-deoxy-D-xylulose 5-phosphate is bound by residues Arg45 and His50. The active-site Proton acceptor is Glu70. Thr100 is a 1-deoxy-D-xylulose 5-phosphate binding site. His191 acts as the Proton donor in catalysis. 3-amino-2-oxopropyl phosphate-binding positions include Gly192 and 213–214; that span reads GH.

This sequence belongs to the PNP synthase family. In terms of assembly, homooctamer; tetramer of dimers.

Its subcellular location is the cytoplasm. It catalyses the reaction 3-amino-2-oxopropyl phosphate + 1-deoxy-D-xylulose 5-phosphate = pyridoxine 5'-phosphate + phosphate + 2 H2O + H(+). It participates in cofactor biosynthesis; pyridoxine 5'-phosphate biosynthesis; pyridoxine 5'-phosphate from D-erythrose 4-phosphate: step 5/5. Functionally, catalyzes the complicated ring closure reaction between the two acyclic compounds 1-deoxy-D-xylulose-5-phosphate (DXP) and 3-amino-2-oxopropyl phosphate (1-amino-acetone-3-phosphate or AAP) to form pyridoxine 5'-phosphate (PNP) and inorganic phosphate. In Solidesulfovibrio magneticus (strain ATCC 700980 / DSM 13731 / RS-1) (Desulfovibrio magneticus), this protein is Pyridoxine 5'-phosphate synthase.